Here is a 78-residue protein sequence, read N- to C-terminus: MNIQITFTDSVRQGTSAKGNPYTFQEGFLHLEDKPFPLQCQFFVESVIPAGSYQVPYRINVNNGRPELAFDFKAMKRA.

It belongs to the inovirus G5P protein family. Homodimer.

Functionally, binds to DNA in a highly cooperative manner without pronounced sequence specificity. During synthesis of the single-stranded (progeny) viral DNA, prevents the conversion into the double-stranded replicative form. G5P is displaced by the capsid protein G8P during phage assembly on the inner bacterial membrane. The polypeptide is DNA-Binding protein G5P (V) (Pseudomonas aeruginosa (Bacteriophage Pf3)).